A 363-amino-acid polypeptide reads, in one-letter code: Uptake hydrogenase small subunit (363 aa).

The segment at residues M1–A46 is a signal peptide (tat-type signal). [4Fe-4S] cluster is bound by residues C63, C66, C161, C195, H233, C236, C261, and C267. [3Fe-4S] cluster is bound by residues C276, C295, and C298.

The protein belongs to the [NiFe]/[NiFeSe] hydrogenase small subunit family. As to quaternary structure, heterodimer of a large and a small subunit. [4Fe-4S] cluster is required as a cofactor. Requires [3Fe-4S] cluster as cofactor. Predicted to be exported by the Tat system. The position of the signal peptide cleavage has not been experimentally proven.

It localises to the cell membrane. The catalysed reaction is H2 + A = AH2. This enzyme recycles the H(2) produced by nitrogenase to increase the production of ATP and to protect nitrogenase against inhibition or damage by O(2) under carbon- or phosphate-limited conditions. In Bradyrhizobium diazoefficiens (strain JCM 10833 / BCRC 13528 / IAM 13628 / NBRC 14792 / USDA 110), this protein is Uptake hydrogenase small subunit (hupA).